We begin with the raw amino-acid sequence, 277 residues long: uncharacterized protein (277 aa).

The segment at 1 to 20 (MVTTSPPPTLTNSVQPHPTT) is disordered.

This is an uncharacterized protein from Acidianus convivator (ATV).